The sequence spans 309 residues: NADH-cytochrome b5 reductase 1 (309 aa).

A helical membrane pass occupies residues 31–51; sequence DWVVYSVALALALGTWKFFQL. Positions 60-168 constitute an FAD-binding FR-type domain; it reads TKFQEFELKE…RGPKGAFVYQ (109 aa). Residues 148 to 163 and 174 to 208 each bind FAD; these read AGLSVGQSIRVRGPKG and HFGMIAGGTGITPMLQVVRAIVRGRAAGDTTQVDL.

This sequence belongs to the flavoprotein pyridine nucleotide cytochrome reductase family. As to quaternary structure, monomer. Component of the 2-(3-amino-3-carboxypropyl)histidine synthase complex composed of DPH1, DPH2, DPH3 and a NADH-dependent reductase, predominantly CBR1. It depends on FAD as a cofactor.

It localises to the mitochondrion outer membrane. It carries out the reaction 2 Fe(III)-[cytochrome b5] + NADH = 2 Fe(II)-[cytochrome b5] + NAD(+) + H(+). The enzyme catalyses 2 Fe(3+)-[Dph3] + NADH = 2 Fe(2+)-[Dph3] + NAD(+) + H(+). The protein operates within protein modification; peptidyl-diphthamide biosynthesis. In terms of biological role, NADH-dependent reductase for DPH3 and cytochrome b5. Required for the first step of diphthamide biosynthesis, a post-translational modification of histidine which occurs in elongation factor 2. DPH1 and DPH2 transfer a 3-amino-3-carboxypropyl (ACP) group from S-adenosyl-L-methionine (SAM) to a histidine residue, the reaction is assisted by a reduction system comprising DPH3 and a NADH-dependent reductase, predominantly CBR1. By reducing DPH3, also involved in the formation of the tRNA wobble base modification mcm5s 2U (5-methoxycarbonylmethyl-2-thiouridine), mediated by the elongator complex. The cytochrome b5/NADH cytochrome b5 reductase electron transfer system supports the catalytic activity of several sterol biosynthetic enzymes. The protein is NADH-cytochrome b5 reductase 1 (CBR1) of Pyricularia oryzae (strain 70-15 / ATCC MYA-4617 / FGSC 8958) (Rice blast fungus).